The primary structure comprises 549 residues: MQADFVIIGSGSAGSALAYRLSEDGKNSVLVIEAGGSDFGPFIQMPAALAWPMSMKRYNWGYLSEPEPNLNNRRITAPRGKVIGGSSSINGMVYVRGHAEDFNRWEELGASGWAYADVLPYFKRMEHSHGGEEGWRGTDGPLHVQRGGFTNPLFRAFIEAGKQAGFETTEDYNGSKQEGFGLMEQTIFAGRRWSAANAYLKPALKRDNVGIVYGLARRIVIENGRATGVEIERGGRTEVVKANREVIVSASSFNSPKLLMLSGIGPAKHLKEMGIEVKADRPGVGANLQDHMEFYFQQVSTKPVSLYSWLPWFWQGVAGAQWLLSKGGLGASNQFEACAFLRSAPGLKQPDIQYHFLPVAISYDGKAAAKSHGFQVHVGYNLSKSRGSVTLRSPDPKADPVLRFNYMSHPEDWEKFRHCVRLTREIFGQKAFDAYRGPEIQPGEGVQSDEQIDSFLREHLESAYHPCGTCKMGAKDDPMAVVDPQTRVIGVDGLRVADSSIFPHVTYGNLNGPSIMTGEKAADHILGKQPLARSNQEPWINPRAAVSDR.

4 to 33 (DFVIIGSGSAGSALAYRLSEDGKNSVLVIE) contacts FAD. His465 serves as the catalytic Proton acceptor. Positions 530–549 (PLARSNQEPWINPRAAVSDR) are disordered.

This sequence belongs to the GMC oxidoreductase family. Requires FAD as cofactor.

It catalyses the reaction choline + A = betaine aldehyde + AH2. The catalysed reaction is betaine aldehyde + NAD(+) + H2O = glycine betaine + NADH + 2 H(+). It functions in the pathway amine and polyamine biosynthesis; betaine biosynthesis via choline pathway; betaine aldehyde from choline (cytochrome c reductase route): step 1/1. Its function is as follows. Involved in the biosynthesis of the osmoprotectant glycine betaine. Catalyzes the oxidation of choline to betaine aldehyde and betaine aldehyde to glycine betaine at the same rate. The polypeptide is Oxygen-dependent choline dehydrogenase (Rhizobium etli (strain ATCC 51251 / DSM 11541 / JCM 21823 / NBRC 15573 / CFN 42)).